Reading from the N-terminus, the 251-residue chain is Cobalt transport protein CbiM (251 aa).

An N-terminal signal peptide occupies residues 1–27 (MNKKKNTILIGLYFLVGIMLFPDRIYA). Transmembrane regions (helical) follow at residues 35–55 (LPVK…ALGI), 66–86 (GPGI…LSSL), 103–123 (LGAI…VLIF), 131–151 (GGLT…PFVA), 166–186 (WLSV…TTAT), and 208–228 (VFAT…VLIF).

It belongs to the CbiM family. Forms an energy-coupling factor (ECF) transporter complex composed of an ATP-binding protein (A component, CbiO), a transmembrane protein (T component, CbiQ) and 2 possible substrate-capture proteins (S components, CbiM and CbiN) of unknown stoichimetry.

It is found in the cell membrane. The protein operates within cofactor biosynthesis; adenosylcobalamin biosynthesis. Its function is as follows. Part of the energy-coupling factor (ECF) transporter complex CbiMNOQ involved in cobalt import. This is Cobalt transport protein CbiM from Acetohalobium arabaticum (strain ATCC 49924 / DSM 5501 / Z-7288).